The primary structure comprises 331 residues: Glycerophosphodiester phosphodiesterase 1 (331 aa).

The Cytoplasmic segment spans residues 1-3 (MWL). A helical membrane pass occupies residues 4 to 24 (WEDQGGLLGPFSFVLVLLLVV). The Lumenal segment spans residues 25–248 (TRSPFNACVL…PRYSVFWKQS (224 aa)). In terms of domain architecture, GP-PDE spans 65 to 331 (VSAIAHRGGS…SMLEDCAPHF (267 aa)). Residues Glu97 and Asp99 each contribute to the Mg(2+) site. Asn168 carries an N-linked (GlcNAc...) asparagine glycan. Asp174 lines the Mg(2+) pocket. Residues 249–269 (VFVVLDILLDWSMHNVLWYLC) traverse the membrane as a helical segment. The Cytoplasmic portion of the chain corresponds to 270 to 331 (GISAFLMQKD…SMLEDCAPHF (62 aa)).

Belongs to the glycerophosphoryl diester phosphodiesterase family. In terms of assembly, interacts with PRAF2. Interacts with RGS16. It depends on Mg(2+) as a cofactor. Post-translationally, N-glycosylated. In terms of tissue distribution, detected in heart, brain, lung, liver, skeletal muscle, kidney, pituitary and testis.

Its subcellular location is the cell membrane. It is found in the cytoplasmic vesicle membrane. It carries out the reaction sn-glycero-3-phospho-1D-myo-inositol + H2O = myo-inositol + sn-glycerol 3-phosphate + H(+). The enzyme catalyses 1-O-(1Z-octadecenyl)-sn-glycero-3-phospho-(N-5Z,8Z,11Z,14Z-eicosatetraenoyl)-ethanolamine + H2O = 1-O-(1Z-octadecenyl)-sn-glycero-3-phosphate + N-(5Z,8Z,11Z,14Z-eicosatetraenoyl)-ethanolamine + H(+). The catalysed reaction is 1-O-(1Z-octadecenyl)-sn-glycero-3-phospho-(N-9Z-octadecenoyl)-ethanolamine + H2O = 1-O-(1Z-octadecenyl)-sn-glycero-3-phosphate + N-(9Z-octadecenoyl) ethanolamine + H(+). It catalyses the reaction 1-O-(1Z-octadecenyl)-sn-glycero-3-phospho-N-hexadecanoyl-ethanolamine + H2O = 1-O-(1Z-octadecenyl)-sn-glycero-3-phosphate + N-hexadecanoylethanolamine + H(+). It carries out the reaction N-(4Z,7Z,10Z,13Z,16Z,19Z)-docosahexaenoyl-sn-glycero-3-phosphoethanolamine + H2O = N-(4Z,7Z,10Z,13Z,16Z,19Z)-docosahexaenoyl ethanolamine + sn-glycerol 3-phosphate + H(+). The enzyme catalyses N-eicosanoyl-sn-glycero-3-phosphoethanolamine + H2O = N-eicosanoyl ethanolamine + sn-glycerol 3-phosphate + H(+). The catalysed reaction is N-hexadecanoyl-sn-glycero-3-phosphoethanolamine + H2O = N-hexadecanoylethanolamine + sn-glycerol 3-phosphate + H(+). It catalyses the reaction N-(9Z-octadecenoyl)-sn-glycero-3-phosphoethanolamine + H2O = N-(9Z-octadecenoyl) ethanolamine + sn-glycerol 3-phosphate + H(+). It carries out the reaction N-(5Z,8Z,11Z,14Z-eicosatetraenoyl)-sn-glycero-3-phosphoethanolamine + H2O = N-(5Z,8Z,11Z,14Z-eicosatetraenoyl)-ethanolamine + sn-glycerol 3-phosphate + H(+). With respect to regulation, inhibited by EDTA, calcium chloride, and zinc chloride. Enhanced by magnesium chloride. Glycerophosphodiester phosphodiesterase activity can be modulated by G-protein signaling pathways. Its function is as follows. Hydrolyzes the phosphodiester bond of glycerophosphodiesters such as glycerophosphoinositol (GroPIns) and glycerophosphoethanolamine (GroPEth), to yield a glycerol phosphate and an alcohol. Hydrolyzes glycerophospho-N-acylethanolamines to N-acylethanolamines in the brain and participates in bioactive N-acylethanolamine biosynthesis such as anandamide (an endocannabinoid), N-palmitoylethanolamine (an anti-inflammatory), and N-oleoylethanolamine (an anorexic). In addition, has a lysophospholipase D activity by hydrolyzing N-acyl-lysoplasmenylethanolamine (N-acyl-lysoPlsEt) to N-acylethanolamine. However lysophospholipase D activity is lower than glycerophosphodiester phosphodiesterase activity. Has little or no activity towards glycerophosphocholine. The chain is Glycerophosphodiester phosphodiesterase 1 from Rattus norvegicus (Rat).